The chain runs to 142 residues: Hemoglobin subunit alpha-2 (142 aa).

The Globin domain maps to 2 to 142 (VLSAADKSNI…VSTVLTSKYR (141 aa)). Histidine 59 serves as a coordination point for O2. Histidine 88 contributes to the heme b binding site.

It belongs to the globin family. Heterotetramer of two alpha chains and two beta chains. As to expression, red blood cells.

Involved in oxygen transport from the lung to the various peripheral tissues. The polypeptide is Hemoglobin subunit alpha-2 (Bubalus bubalis (Domestic water buffalo)).